The chain runs to 451 residues: Phosphoglucosamine mutase (451 aa).

Ser-101 (phosphoserine intermediate) is an active-site residue. Ser-101, Asp-240, Asp-242, and Asp-244 together coordinate Mg(2+). Phosphoserine is present on Ser-101.

The protein belongs to the phosphohexose mutase family. Mg(2+) serves as cofactor. In terms of processing, activated by phosphorylation.

The enzyme catalyses alpha-D-glucosamine 1-phosphate = D-glucosamine 6-phosphate. Functionally, catalyzes the conversion of glucosamine-6-phosphate to glucosamine-1-phosphate. The protein is Phosphoglucosamine mutase of Streptococcus pyogenes serotype M3 (strain SSI-1).